The sequence spans 530 residues: Hyccin 2 (530 aa).

2 positions are modified to phosphothreonine: T30 and T306. S321 and S341 each carry phosphoserine. Residues 328 to 410 (RREGAEGVNG…DSVVRKQYVQ (83 aa)) form a disordered region. The segment covering 353–373 (SGASLSSQPIGTKPSSSSQRG) has biased composition (polar residues). Phosphoserine is present on residues S430, S442, S444, and S491. Residues 502–530 (EGKELLSPGAPLTKQSRSPSFNMQLISQV) are disordered. Residues 514–530 (TKQSRSPSFNMQLISQV) are compositionally biased toward polar residues.

The protein belongs to the Hyccin family. Component of a phosphatidylinositol 4-kinase (PI4K) complex, composed of PI4KA, EFR3 (EFR3A or EFR3B), TTC7 (TTC7A or TTC7B) and HYCC (HYCC1 or HYCC2).

It localises to the cytoplasm. The protein resides in the cytosol. Its subcellular location is the cell membrane. Functionally, component of a complex required to localize phosphatidylinositol 4-kinase (PI4K) to the plasma membrane. The protein is Hyccin 2 of Homo sapiens (Human).